The following is a 276-amino-acid chain: 1H-3-hydroxy-4-oxoquinaldine 2,4-dioxygenase (276 aa).

The region spanning 28 to 150 is the AB hydrolase-1 domain; the sequence is PAILLLPGWC…TLLKDPERWR (123 aa). Substrate is bound by residues 36 to 38, 100 to 101, and Trp160; these read WCH and HS. The active-site Proton donor/acceptor is His251.

Belongs to the AB hydrolase superfamily. It depends on None. Contrary to most other dioxygenases, this enzyme does not require a cofactor for catalysis. as a cofactor.

The enzyme catalyses 3-hydroxy-2-methyl-1H-quinolin-4-one + O2 = N-acetylanthranilate + CO + H(+). In terms of biological role, ring-cleaving dioxygenase involved in quinaldine degradation and utilization. This is 1H-3-hydroxy-4-oxoquinaldine 2,4-dioxygenase (hod) from Paenarthrobacter nitroguajacolicus (Arthrobacter nitroguajacolicus).